The primary structure comprises 378 residues: Erythronate-4-phosphate dehydrogenase (378 aa).

Substrate-binding residues include serine 45 and threonine 66. Residues aspartate 146 and threonine 175 each coordinate NAD(+). Arginine 208 is a catalytic residue. Residue aspartate 232 coordinates NAD(+). Glutamate 237 is an active-site residue. Residue histidine 254 is the Proton donor of the active site. Glycine 257 contributes to the NAD(+) binding site. Tyrosine 258 contributes to the substrate binding site.

This sequence belongs to the D-isomer specific 2-hydroxyacid dehydrogenase family. PdxB subfamily. Homodimer.

The protein resides in the cytoplasm. The enzyme catalyses 4-phospho-D-erythronate + NAD(+) = (R)-3-hydroxy-2-oxo-4-phosphooxybutanoate + NADH + H(+). Its pathway is cofactor biosynthesis; pyridoxine 5'-phosphate biosynthesis; pyridoxine 5'-phosphate from D-erythrose 4-phosphate: step 2/5. Catalyzes the oxidation of erythronate-4-phosphate to 3-hydroxy-2-oxo-4-phosphonooxybutanoate. The sequence is that of Erythronate-4-phosphate dehydrogenase from Salmonella arizonae (strain ATCC BAA-731 / CDC346-86 / RSK2980).